The chain runs to 701 residues: Low-density lipoprotein receptor-related protein 12 (701 aa).

Residues 1–334 are Extracellular-facing; it reads GKSEEPNCAC…ENCPVIVPTR (334 aa). 2 LDL-receptor class A domains span residues 7 to 43 and 56 to 97; these read NCAC…EICA and PCAY…IDCD. Disulfide bonds link Cys8-Cys20, Cys15-Cys33, Cys27-Cys42, Cys57-Cys74, Cys64-Cys87, Cys81-Cys96, and Cys101-Cys127. A CUB domain is found at 101–214; that stretch reads CGQWLKYFYG…RGFNATYQVD (114 aa). Asn126 and Asn208 each carry an N-linked (GlcNAc...) asparagine glycan. 3 LDL-receptor class A domains span residues 216–253, 254–291, and 292–328; these read FCLP…INCT, MCQK…KNCF, and FCQP…ENCP. Disulfide bonds link Cys217–Cys230, Cys224–Cys243, Cys237–Cys252, Cys255–Cys268, Cys262–Cys281, Cys275–Cys290, Cys293–Cys305, Cys300–Cys318, and Cys312–Cys327. Asn251 is a glycosylation site (N-linked (GlcNAc...) asparagine). Residue Asn283 is glycosylated (N-linked (GlcNAc...) asparagine). The chain crosses the membrane as a helical span at residues 335 to 355; the sequence is VITAAVIGSLICGLLLVIALG. The Cytoplasmic portion of the chain corresponds to 356–701; the sequence is CTCKLYSLRM…TSDDEALLLC (346 aa). Disordered regions lie at residues 465-520, 535-565, 590-612, and 643-665; these read ADGD…LPQK, ASSS…SPAR, SSVS…REDD, and DQGQ…SNRD. 2 stretches are compositionally biased toward polar residues: residues 590–599 and 643–656; these read SSVSQNQSPL and DQGQ…SATN.

The protein belongs to the LDLR family. In terms of assembly, may interact with RACK1, ZFYVE9 and NMRK2.

Its subcellular location is the membrane. The protein localises to the coated pit. Probable receptor, which may be involved in the internalization of lipophilic molecules and/or signal transduction. May act as a tumor suppressor. The polypeptide is Low-density lipoprotein receptor-related protein 12 (LRP12) (Macaca fascicularis (Crab-eating macaque)).